We begin with the raw amino-acid sequence, 1462 residues long: Tyrosine-protein phosphatase 69D (1462 aa).

Positions 1–28 (MALLYRRMSMLLNIILAYIFLCAICVQG) are cleaved as a signal peptide. 2 Ig-like C2-type domains span residues 29–125 (SVKQ…TEFQ) and 131–230 (PSKV…KEIT). Topologically, residues 29 to 805 (SVKQEWAEIG…MDYYLSIGVK (777 aa)) are extracellular. N-linked (GlcNAc...) asparagine glycans are attached at residues Asn40, Asn58, Asn64, Asn85, Asn109, Asn119, Asn162, Asn191, Asn196, Asn209, Asn255, Asn288, Asn302, Asn429, Asn442, Asn451, Asn516, Asn613, Asn701, and Asn755. A disulfide bond links Cys45 and Cys112. A disulfide bond links Cys154 and Cys214. Fibronectin type-III domains follow at residues 237 to 332 (PQVS…TLSY), 334 to 435 (PIFI…TMDG), and 439 to 547 (KPTN…TPDA). A helical transmembrane segment spans residues 806 to 823 (AGAVLLGVILVFIVLWVF). Topologically, residues 824 to 1462 (HHKKTKNELQ…LHHIAESTLD (639 aa)) are cytoplasmic. 2 Tyrosine-protein phosphatase domains span residues 893 to 1156 (FLRE…LLDT) and 1187 to 1450 (LEVE…IINY). Active-site phosphocysteine intermediate residues include Cys1097 and Cys1391.

The protein belongs to the protein-tyrosine phosphatase family. Receptor class subfamily.

The protein localises to the membrane. The enzyme catalyses O-phospho-L-tyrosyl-[protein] + H2O = L-tyrosyl-[protein] + phosphate. Its function is as follows. Possible cell adhesion receptor. The sequence is that of Tyrosine-protein phosphatase 69D (Ptp69D) from Drosophila melanogaster (Fruit fly).